A 400-amino-acid chain; its full sequence is MAPPNTIDAGLTQRHISTSAAPTSAKPAFERNYQLPEFTIKEIRECIPAHCFERSGLRGLCHVAIDLTWASLLFLAATQIDKFENPLIRYLAWPAYWIMQGIVCTGIWVLAHECGHQSFSTSKTLNNTVGWILHSMLLVPYHSWRISHSKHHKATGHMTKDQVFVPKTRSQVGLPPKENAAAAVQEEDMSVHLDEEAPIVTLFWMVIQFLFGWPAYLIMNASGQDYGRWTSHFHTYSPIFEPRNFFDIIISDLGVLAALGALIYASMQLSLLTVTKYYIVPYLFVNFWLVLITFLQHTDPKLPHYREGAWNFQRGALCTVDRSFGKFLDHMFHGIVHTHVAHHLFSQMPFYHAEEATYHLKKLLGEYYVYDPSPIVVAVWRSFRECRFVEDHGDVVFFKK.

A helical membrane pass occupies residues 91 to 111 (LAWPAYWIMQGIVCTGIWVLA). Positions 112–116 (HECGH) match the Histidine box-1 motif. The Histidine box-2 signature appears at 148-152 (HSKHH). 3 helical membrane passes run 199–219 (IVTL…YLIM), 245–265 (FFDI…LIYA), and 277–297 (YYIV…FLQH). The short motif at 339–343 (HVAHH) is the Histidine box-3 element.

The protein belongs to the fatty acid desaturase type 1 family.

The protein resides in the membrane. It carries out the reaction (9Z)-octadecenoyl-CoA + 2 Fe(II)-[cytochrome b5] + O2 + 2 H(+) = (9Z,12Z)-octadecadienoyl-CoA + 2 Fe(III)-[cytochrome b5] + 2 H2O. The catalysed reaction is (9Z)-hexadecenoyl-CoA + 2 Fe(II)-[cytochrome b5] + O2 + 2 H(+) = (9Z,12Z)-hexadecadienoyl-CoA + 2 Fe(III)-[cytochrome b5] + 2 H2O. Its pathway is lipid metabolism; polyunsaturated fatty acid biosynthesis. Its function is as follows. Catalyzes the desaturation of oleic acid (Delta(9)-18:1) to linoleic acid (Delta(9), Delta(12)-18:2). This Mortierella alpina (Oleaginous fungus) protein is Delta(12) fatty acid desaturase.